A 424-amino-acid polypeptide reads, in one-letter code: 3-ketoacyl-CoA thiolase B, peroxisomal (424 aa).

Residues 1–26 constitute a peroxisome transit peptide; that stretch reads MHRLQVVLGHLAGRSESSSALQAAPC. Residues 1–26 form a PTS2-type peroxisomal targeting signal region; sequence MHRLQVVLGHLAGRSESSSALQAAPC. The active-site Acyl-thioester intermediate is the Cys-123. Lys-173 and Lys-234 each carry N6-acetyllysine. CoA contacts are provided by Arg-249, Thr-252, and Ser-276. Cys-408 (proton donor/acceptor) is an active-site residue.

It belongs to the thiolase-like superfamily. Thiolase family. In terms of assembly, homodimer. Interacts (via PTS2-type peroxisomal targeting signal region) with PEX7; leading to its translocation into peroxisomes.

It is found in the peroxisome. It catalyses the reaction an acyl-CoA + acetyl-CoA = a 3-oxoacyl-CoA + CoA. The enzyme catalyses 2 acetyl-CoA = acetoacetyl-CoA + CoA. The catalysed reaction is hexanoyl-CoA + acetyl-CoA = 3-oxooctanoyl-CoA + CoA. It carries out the reaction tetradecanoyl-CoA + acetyl-CoA = 3-oxohexadecanoyl-CoA + CoA. It catalyses the reaction 3-oxohexadecanedioyl-CoA + CoA = tetradecanedioyl-CoA + acetyl-CoA. The enzyme catalyses 3-oxo-(6Z,9Z,12Z,15Z,18Z,21Z)-tetracosahexaenoyl-CoA + CoA = (4Z,7Z,10Z,13Z,16Z,19Z)-docosahexaenoyl-CoA + acetyl-CoA. The protein operates within lipid metabolism; peroxisomal fatty acid beta-oxidation. Responsible for the thiolytic cleavage of straight chain 3-keto fatty acyl-CoAs (3-oxoacyl-CoAs). Plays an important role in fatty acid peroxisomal beta-oxidation. Catalyzes the cleavage of short, medium, long, and very long straight chain 3-oxoacyl-CoAs. Medium chain straight 3-oxoacyl-CoAs are preferred substrates. The sequence is that of 3-ketoacyl-CoA thiolase B, peroxisomal from Rattus norvegicus (Rat).